The following is a 211-amino-acid chain: uncharacterized protein (211 aa).

This is an uncharacterized protein from Homo sapiens (Human).